Consider the following 46-residue polypeptide: uncharacterized protein (46 aa).

This is an uncharacterized protein from Shigella flexneri.